A 363-amino-acid polypeptide reads, in one-letter code: Phosphoserine aminotransferase (363 aa).

R42 lines the L-glutamate pocket. Residues 76-77 (GR), W102, T156, D175, and Q198 each bind pyridoxal 5'-phosphate. K199 carries the post-translational modification N6-(pyridoxal phosphate)lysine. 240–241 (NT) lines the pyridoxal 5'-phosphate pocket.

Belongs to the class-V pyridoxal-phosphate-dependent aminotransferase family. SerC subfamily. Homodimer. Requires pyridoxal 5'-phosphate as cofactor.

Its subcellular location is the cytoplasm. It catalyses the reaction O-phospho-L-serine + 2-oxoglutarate = 3-phosphooxypyruvate + L-glutamate. The enzyme catalyses 4-(phosphooxy)-L-threonine + 2-oxoglutarate = (R)-3-hydroxy-2-oxo-4-phosphooxybutanoate + L-glutamate. It functions in the pathway amino-acid biosynthesis; L-serine biosynthesis; L-serine from 3-phospho-D-glycerate: step 2/3. The protein operates within cofactor biosynthesis; pyridoxine 5'-phosphate biosynthesis; pyridoxine 5'-phosphate from D-erythrose 4-phosphate: step 3/5. Its function is as follows. Catalyzes the reversible conversion of 3-phosphohydroxypyruvate to phosphoserine and of 3-hydroxy-2-oxo-4-phosphonooxybutanoate to phosphohydroxythreonine. This is Phosphoserine aminotransferase from Shewanella baltica (strain OS155 / ATCC BAA-1091).